The following is a 179-amino-acid chain: Large ribosomal subunit protein uL6 (179 aa).

This sequence belongs to the universal ribosomal protein uL6 family. As to quaternary structure, part of the 50S ribosomal subunit.

Functionally, this protein binds to the 23S rRNA, and is important in its secondary structure. It is located near the subunit interface in the base of the L7/L12 stalk, and near the tRNA binding site of the peptidyltransferase center. The chain is Large ribosomal subunit protein uL6 from Bifidobacterium longum (strain DJO10A).